The following is a 112-amino-acid chain: Photosystem II reaction center Psb28 protein (112 aa).

Belongs to the Psb28 family. In terms of assembly, part of the photosystem II complex.

The protein localises to the cellular thylakoid membrane. The chain is Photosystem II reaction center Psb28 protein from Synechocystis sp. (strain ATCC 27184 / PCC 6803 / Kazusa).